The following is a 265-amino-acid chain: H-2 class II histocompatibility antigen, A beta chain (265 aa).

Positions 1 to 27 (MALQIPSLLLSAAVVVLMVLSSPGTEG) are cleaved as a signal peptide. A beta-1 region spans residues 28-122 (GDSERHFVYQ…PETHTSLRRL (95 aa)). The Extracellular segment spans residues 28–226 (GDSERHFVYQ…RAQSESAWSK (199 aa)). Intrachain disulfides connect Cys-42–Cys-106 and Cys-145–Cys-201. N-linked (GlcNAc...) asparagine glycosylation is present at Asn-46. The segment at 123-216 (EQPNVVISLS…SLKSPITVEW (94 aa)) is beta-2. One can recognise an Ig-like C1-type domain in the interval 125–213 (PNVVISLSRT…EHPSLKSPIT (89 aa)). Positions 217 to 226 (RAQSESAWSK) are connecting peptide. Residues 227–247 (MLSGIGGCVLGVIFLGLGLFI) form a helical membrane-spanning segment. The Cytoplasmic portion of the chain corresponds to 248–265 (RHRSQKGPRGPPPAGLLQ).

This sequence belongs to the MHC class II family. Post-translationally, ubiquitinated in immature dendritic cells leading to down-regulation of MHC class II.

Its subcellular location is the membrane. In Mus musculus (Mouse), this protein is H-2 class II histocompatibility antigen, A beta chain (H2-Ab1).